The chain runs to 172 residues: SsrA-binding protein (172 aa).

This sequence belongs to the SmpB family.

Its subcellular location is the cytoplasm. In terms of biological role, required for rescue of stalled ribosomes mediated by trans-translation. Binds to transfer-messenger RNA (tmRNA), required for stable association of tmRNA with ribosomes. tmRNA and SmpB together mimic tRNA shape, replacing the anticodon stem-loop with SmpB. tmRNA is encoded by the ssrA gene; the 2 termini fold to resemble tRNA(Ala) and it encodes a 'tag peptide', a short internal open reading frame. During trans-translation Ala-aminoacylated tmRNA acts like a tRNA, entering the A-site of stalled ribosomes, displacing the stalled mRNA. The ribosome then switches to translate the ORF on the tmRNA; the nascent peptide is terminated with the 'tag peptide' encoded by the tmRNA and targeted for degradation. The ribosome is freed to recommence translation, which seems to be the essential function of trans-translation. In Dehalococcoides mccartyi (strain CBDB1), this protein is SsrA-binding protein.